Reading from the N-terminus, the 73-residue chain is Large ribosomal subunit protein uL30 (73 aa).

The protein belongs to the universal ribosomal protein uL30 family. In terms of assembly, part of the 50S ribosomal subunit.

This is Large ribosomal subunit protein uL30 from Borrelia hermsii (strain HS1 / DAH).